Reading from the N-terminus, the 1803-residue chain is Pyruvate dehydrogenase [NADP(+)], mitochondrial (1803 aa).

Residues 1–37 (MKQSVRPIISNVLRKEVALYSTIIGQDKGKEPTGRTY) constitute a mitochondrion transit peptide. 2 4Fe-4S ferredoxin-type domains span residues 747–776 (FIPQ…PFVL) and 802–831 (FRIQ…MTDA). [4Fe-4S] cluster-binding residues include Cys756, Cys759, Cys762, Cys766, Cys811, Cys814, Cys817, and Cys821. Positions 1248–1391 (VTILYGSETG…GFNNWIPSVW (144 aa)) constitute a Flavodoxin-like domain. One can recognise an FAD-binding FR-type domain in the interval 1425–1650 (KSTPVLSITG…IHPTAMEFPD (226 aa)). FAD is bound by residues 1458–1469 (YQVGDSLGVFPE) and 1585–1595 (IKPRYYSISSA).

The protein in the N-terminal section; belongs to the pyruvate:ferredoxin/flavodoxin oxidoreductase family. In terms of assembly, homodimer. The cofactor is FAD. It depends on FMN as a cofactor. Requires thiamine diphosphate as cofactor. Iron-sulfur cluster is required as a cofactor.

Its subcellular location is the mitochondrion. The catalysed reaction is pyruvate + NADP(+) + CoA = acetyl-CoA + CO2 + NADPH. Its function is as follows. Pyruvate dehydrogenase [NADP(+)] is one of three enzymes participating in respiratory metabolism. The enzyme is also active with 2-oxobutyrate and oxaloacetate. The enzyme is oxygen sensitive. In Euglena gracilis, this protein is Pyruvate dehydrogenase [NADP(+)], mitochondrial (PNO).